The chain runs to 99 residues: DNA-binding protein Fis (99 aa).

Positions 75 to 94 (QTRAASIMGINRSTLRKKLK) form a DNA-binding region, H-T-H motif.

The protein belongs to the transcriptional regulatory Fis family. Homodimer.

Functionally, activates ribosomal RNA transcription. Plays a direct role in upstream activation of rRNA promoters. The sequence is that of DNA-binding protein Fis from Buchnera aphidicola subsp. Schizaphis graminum (strain Sg).